A 606-amino-acid polypeptide reads, in one-letter code: Protein spire homolog 2 (606 aa).

One can recognise a KIND domain in the interval 21–219; that stretch reads LSLEEVLKSY…RALFLETLEL (199 aa). The segment at 147–181 is disordered; sequence KHCGSNAAKDEGYSGQDEEEEEEEEEEEEGAGRGI. Over residues 162–175 the composition is skewed to acidic residues; the sequence is QDEEEEEEEEEEEE. WH2 domains lie at 263-277 and 357-374; these read QLMKELRQGVKLKKV and LHDRVLAEIRQDHKLRPV. Disordered regions lie at residues 438 to 464 and 517 to 537; these read DEDSPDGVDMRRVESSPTPLKRDRSFS and CRSLSSDDRSSDPGGDSASHG. The segment covering 445-464 has biased composition (basic and acidic residues); that stretch reads VDMRRVESSPTPLKRDRSFS. The segment at 554–574 is spir-box; that stretch reads LALTVDGVINVRRILVKAEME.

It belongs to the spire family.

Its subcellular location is the cytoplasm. It is found in the cytoskeleton. The protein localises to the cytosol. It localises to the cell membrane. The protein resides in the cytoplasmic vesicle membrane. Its function is as follows. Acts as an actin nucleation factor, remains associated with the slow-growing pointed end of the new filament. Involved in intracellular vesicle transport along actin fibers, providing a novel link between actin cytoskeleton dynamics and intracellular transport. Required for asymmetric spindle positioning and asymmetric cell division during oocyte meiosis. Required for normal formation of the cleavage furrow and for polar body extrusion during female germ cell meiosis. Also acts in the nucleus: together with SPIRE1 and SPIRE2, promotes assembly of nuclear actin filaments in response to DNA damage in order to facilitate movement of chromatin and repair factors after DNA damage. The protein is Protein spire homolog 2 (spire2) of Danio rerio (Zebrafish).